A 100-amino-acid chain; its full sequence is Sec-independent protein translocase protein TatA (100 aa).

A helical membrane pass occupies residues Met-1–Gly-21. Residues Leu-46–Asp-58 are compositionally biased toward basic and acidic residues. Positions Leu-46–Ser-100 are disordered. The segment covering Gln-69 to Gln-78 has biased composition (low complexity).

It belongs to the TatA/E family. The Tat system comprises two distinct complexes: a TatABC complex, containing multiple copies of TatA, TatB and TatC subunits, and a separate TatA complex, containing only TatA subunits. Substrates initially bind to the TatABC complex, which probably triggers association of the separate TatA complex to form the active translocon.

The protein resides in the cell membrane. Functionally, part of the twin-arginine translocation (Tat) system that transports large folded proteins containing a characteristic twin-arginine motif in their signal peptide across membranes. TatA could form the protein-conducting channel of the Tat system. This chain is Sec-independent protein translocase protein TatA, found in Salinispora tropica (strain ATCC BAA-916 / DSM 44818 / JCM 13857 / NBRC 105044 / CNB-440).